The chain runs to 177 residues: Ribosome maturation factor RimM (177 aa).

In terms of domain architecture, PRC barrel spans 98 to 177; that stretch reads DDGYYWKDLM…TIEVDWDPGF (80 aa).

The protein belongs to the RimM family. As to quaternary structure, binds ribosomal protein uS19.

The protein localises to the cytoplasm. Its function is as follows. An accessory protein needed during the final step in the assembly of 30S ribosomal subunit, possibly for assembly of the head region. Essential for efficient processing of 16S rRNA. May be needed both before and after RbfA during the maturation of 16S rRNA. It has affinity for free ribosomal 30S subunits but not for 70S ribosomes. This is Ribosome maturation factor RimM from Enterobacter sp. (strain 638).